We begin with the raw amino-acid sequence, 617 residues long: Vacuolar protein sorting-associated protein 33B (617 aa).

It belongs to the STXBP/unc-18/SEC1 family. In terms of assembly, interacts with vipas39. As to expression, widely expressed from 4 hours post-fertilization (hpf) to 24 hpf. At 48 hpf, localized to brain, retina, ear, liver and proximal intestine. This expression pattern is more pronounced at 72 hpf and persists through 5 days post-fertilization (dpf). At 3 dpf and 4 dpf, expression in the liver is predominantly in developing biliary epithelial cells. No expression detected in kidney or spinal cord.

Its subcellular location is the late endosome membrane. The protein resides in the lysosome membrane. Its function is as follows. May play a role in vesicle-mediated protein trafficking to lysosomal compartments and in membrane docking/fusion reactions of late endosomes/lysosomes. Required for proper trafficking and targeting of the collagen-modifying enzyme lysyl hydroxylase 3 (LH3) to intracellular collagen. Mediates phagolysosomal fusion in macrophages. Proposed to be involved in endosomal maturation implicating vipas39. In epithelial cells, the vps33b:vipas39 complex may play a role in the apical recycling pathway and in the maintenance of the apical-basolateral polarity. Plays a role in bile duct development. This is Vacuolar protein sorting-associated protein 33B from Danio rerio (Zebrafish).